Reading from the N-terminus, the 728-residue chain is 1,4-alpha-glucan branching enzyme GlgB (728 aa).

The active-site Nucleophile is Asp405. Catalysis depends on Glu458, which acts as the Proton donor.

It belongs to the glycosyl hydrolase 13 family. GlgB subfamily. As to quaternary structure, monomer.

It catalyses the reaction Transfers a segment of a (1-&gt;4)-alpha-D-glucan chain to a primary hydroxy group in a similar glucan chain.. Its pathway is glycan biosynthesis; glycogen biosynthesis. In terms of biological role, catalyzes the formation of the alpha-1,6-glucosidic linkages in glycogen by scission of a 1,4-alpha-linked oligosaccharide from growing alpha-1,4-glucan chains and the subsequent attachment of the oligosaccharide to the alpha-1,6 position. This Shigella dysenteriae serotype 1 (strain Sd197) protein is 1,4-alpha-glucan branching enzyme GlgB.